The sequence spans 853 residues: MSAIENFDAHTPMMQQYLKLKAQHPEILLFYRMGDFYELFYDDAKRASQLLDISLTKRGASAGEPIPMAGIPYHAVENYLAKLVNQGESVAICEQIGDPATSKGPVERKVVRIVTPGTISDEALLQERQDNLLAAIWQDSKGFGYATLDISSGRFRLSEPADRETMAAELQRTNPAELLYAEDFAEMSLIEGRRGLRRRPLWEFEIDTARQQLNLQFGTRDLVGFGVENAPRGLCAAGCLLQYAKDTQRTTLPHIRSITMEREQDSIIMDAATRRNLEITQNLAGGAENTLASVLDCTVTPMGSRMLKRWLHMPVRDTRVLLERQQTIGALQDFTAGLQPVLRQVGDLERILARLALRTARPRDLARMRHAFQQLPELRAQLETVDSAPVQALREKMGEFAELRDLLERAIIDTPPVLVRDGGVIASGYNEELDEWRALADGATDYLERLEVRERERTGLDTLKVGFNAVHGYYIQISRGQSHLAPINYMRRQTLKNAERYIIPELKEYEDKVLTSKGKALALEKQLYEELFDLLLPHLEALQQSASALAELDVLVNLAERAYTLNYTCPTFIDKQGIRITEGRHPVVERVLNEPFIANPLNLSPQRRMLIITGPNMGGKSTYMRQTALIALMAYIGSYVPAQKVEIGPIDRIFTRVGAADDLASGRSTFMVEMTETANILHNATEYSLVLMDEIGRGTSTYDGLSLAWACAENLANKIKALTLFATHYFELTQLPEKMEGIANVHLDALEHGDTIAFMHSVQDGAASKSYGLAVAALAGVPKEVIKRARQKLRELENISPNAAATQVDGTQMSLLSVPEETSPAVEALENLDPDSLTPRQALEWIYRLKSLV.

614–621 (GPNMGGKS) provides a ligand contact to ATP.

Belongs to the DNA mismatch repair MutS family.

In terms of biological role, this protein is involved in the repair of mismatches in DNA. It is possible that it carries out the mismatch recognition step. This protein has a weak ATPase activity. The chain is DNA mismatch repair protein MutS from Shigella dysenteriae serotype 1 (strain Sd197).